Reading from the N-terminus, the 923-residue chain is SPX and EXS domain-containing protein 1 (923 aa).

The SPX domain maps to 1–326 (MKFGKKLRFE…PMNSSIKLDQ (326 aa)). 2 stretches are compositionally biased toward low complexity: residues 94–147 (QEQS…QQQQ) and 186–195 (TTTTTTTTTT). Disordered regions lie at residues 94–150 (QEQS…QDLK) and 185–208 (PTTT…FKNK). 9 helical membrane passes run 382 to 402 (LKLG…IILF), 416 to 436 (FVST…VWLW), 471 to 491 (ASFL…TVTG), 499 to 519 (PAQV…FFPF), 529 to 551 (LLFI…RALF), 591 to 611 (SIAL…QCIL), 620 to 640 (IHLG…FSAL), 655 to 675 (ILWC…DVVV), and 700 to 720 (WSYY…TLTI). The 201-residue stretch at 585–785 (RCNQVNSIAL…KNEVPKVESP (201 aa)) folds into the EXS domain. A disordered region spans residues 793 to 871 (SSYPYRQDNF…NNSPSGSNSS (79 aa)).

It belongs to the SYG1 (TC 2.A.94) family.

Its subcellular location is the membrane. The protein is SPX and EXS domain-containing protein 1 of Dictyostelium discoideum (Social amoeba).